A 261-amino-acid chain; its full sequence is Ice-binding protein (261 aa).

The first 20 residues, 1–20 (MSLLSIITIGLAGLGGLVNG), serve as a signal peptide directing secretion. A glycan (N-linked (GlcNAc...) asparagine) is linked at Asn-185.

It belongs to the ice-binding protein family. In terms of assembly, homodimer. Dimerization is not required for the thermal hysteresis (TH) activity. Glycosylated. Glycosylation is not required for the thermal hysteresis (TH) activity. Glycosylation may increase stability and secretion of this protein.

The protein resides in the secreted. Confers freeze tolerance. Binds to the surface of ice crystals and inhibits their growth. Has low thermal hysteresis (TH) activity, which is the ability to lower the freezing point of an aqueous solution below its melting point. The TH activity of this protein is approximately 0.2 degrees Celsius at 50 uM and 0.3 degrees Celsius at 400 uM. The protein is Ice-binding protein of Leucosporidium sp. (strain AY30) (Arctic yeast).